A 350-amino-acid polypeptide reads, in one-letter code: Probable arabinogalactan endo-beta-1,4-galactanase A (350 aa).

The N-terminal stretch at 1–16 is a signal peptide; the sequence is MIYPLLLSALPLLSSA. N128 carries N-linked (GlcNAc...) asparagine glycosylation. The active-site Proton donor is the E152. E262 functions as the Nucleophile in the catalytic mechanism.

It belongs to the glycosyl hydrolase 53 family.

The protein resides in the secreted. The catalysed reaction is The enzyme specifically hydrolyzes (1-&gt;4)-beta-D-galactosidic linkages in type I arabinogalactans.. Its function is as follows. Endogalactanase involved in the degradation of plant cell wall polysaccharides, and more particularly of hairy regions of pectin. In Aspergillus tubingensis, this protein is Probable arabinogalactan endo-beta-1,4-galactanase A (galA).